Reading from the N-terminus, the 344-residue chain is uncharacterized protein (344 aa).

Transmembrane regions (helical) follow at residues 155 to 175 (IARITLAPLGMIFLVYSIFLV), 181 to 201 (WGLGGIIFFLGVYFMVKAYGW), 221 to 241 (LSFIFYVTSAILLIISIVNGF), 254 to 274 (ISSFIFYSTWWFVLSGIFALL), 291 to 311 (FTIIFLLIAFGLIVWASAAYV), and 319 to 339 (ALQNLAGAIVGAILIAAIGVF).

To M.jannaschii MJ1032.

The protein localises to the cell membrane. This is an uncharacterized protein from Archaeoglobus fulgidus (strain ATCC 49558 / DSM 4304 / JCM 9628 / NBRC 100126 / VC-16).